Reading from the N-terminus, the 671-residue chain is tRNA(Met) cytidine acetyltransferase TmcA (671 aa).

ATP contacts are provided by residues Q180, 202–211 (GRGKSALAGQ), and R319. Positions 349 to 531 (IRFSAFTQAL…SGCYTAMALL (183 aa)) constitute an N-acetyltransferase domain. Residues 461–463 (IAV), 468–474 (QREGIGQ), E499, and R506 contribute to the acetyl-CoA site.

The protein belongs to the RNA cytidine acetyltransferase family. TmcA subfamily.

It localises to the cytoplasm. The catalysed reaction is cytidine(34) in elongator tRNA(Met) + acetyl-CoA + ATP + H2O = N(4)-acetylcytidine(34) in elongator tRNA(Met) + ADP + phosphate + CoA + H(+). In terms of biological role, catalyzes the formation of N(4)-acetylcytidine (ac(4)C) at the wobble position of tRNA(Met), by using acetyl-CoA as an acetyl donor and ATP (or GTP). The sequence is that of tRNA(Met) cytidine acetyltransferase TmcA from Citrobacter koseri (strain ATCC BAA-895 / CDC 4225-83 / SGSC4696).